Consider the following 443-residue polypeptide: Postreplication repair E3 ubiquitin-protein ligase rad18 (443 aa).

Residues 30–68 (CQVCKDFFDNPVITSCSHTFCSLCIRRCLSTEGKCPTCR) form an RING-type zinc finger. Residues 106-157 (GTDDSGDLAAEEPASKKRKIEPNAIVGTDGLPEEGIRTRSQSRGASRQPQAT) form a disordered region. Positions 143–157 (TRSQSRGASRQPQAT) are enriched in polar residues. The UBZ4-type zinc-finger motif lies at 175–202 (LVPCPVCGRRMKEEAVFRHLDSCTGTAE). 4 residues coordinate Zn(2+): Cys-178, Cys-181, His-193, and Cys-197. The SAP domain occupies 239 to 273 (LKDTVLRKKLKDLGIPNWGPRALLQRRHTEWLNLW). Polar residues-rich tracts occupy residues 350 to 363 (IPNA…TPRS) and 431 to 443 (PISS…KTPH). The disordered stretch occupies residues 350 to 443 (IPNASQANSD…SSASTHKTPH (94 aa)).

The protein belongs to the RAD18 family. In terms of assembly, interacts with E2 UBC2, forming a complex with ubiquitin ligase activity.

The protein localises to the nucleus. It catalyses the reaction S-ubiquitinyl-[E2 ubiquitin-conjugating enzyme]-L-cysteine + [acceptor protein]-L-lysine = [E2 ubiquitin-conjugating enzyme]-L-cysteine + N(6)-ubiquitinyl-[acceptor protein]-L-lysine.. It participates in protein modification; protein ubiquitination. In terms of biological role, E3 RING-finger protein, member of the UBC2/RAD6 epistasis group. Associates to the E2 ubiquitin conjugating enzyme UBC2/RAD6 to form the UBC2-RAD18 ubiquitin ligase complex involved in postreplicative repair (PRR) of damaged DNA. The chain is Postreplication repair E3 ubiquitin-protein ligase rad18 (uvsH) from Emericella nidulans (strain FGSC A4 / ATCC 38163 / CBS 112.46 / NRRL 194 / M139) (Aspergillus nidulans).